Here is a 485-residue protein sequence, read N- to C-terminus: Cobyric acid synthase (485 aa).

Positions 248–435 constitute a GATase cobBQ-type domain; the sequence is RLKVAVAVPP…LHGLFESPAA (188 aa). Cys-329 serves as the catalytic Nucleophile. His-427 is an active-site residue.

Belongs to the CobB/CobQ family. CobQ subfamily.

It functions in the pathway cofactor biosynthesis; adenosylcobalamin biosynthesis. Its function is as follows. Catalyzes amidations at positions B, D, E, and G on adenosylcobyrinic A,C-diamide. NH(2) groups are provided by glutamine, and one molecule of ATP is hydrogenolyzed for each amidation. This is Cobyric acid synthase from Azotobacter vinelandii (strain DJ / ATCC BAA-1303).